We begin with the raw amino-acid sequence, 348 residues long: Tetraacyldisaccharide 4'-kinase (348 aa).

Residue 54 to 61 (TVGGAGKT) coordinates ATP.

Belongs to the LpxK family.

It carries out the reaction a lipid A disaccharide + ATP = a lipid IVA + ADP + H(+). Its pathway is glycolipid biosynthesis; lipid IV(A) biosynthesis; lipid IV(A) from (3R)-3-hydroxytetradecanoyl-[acyl-carrier-protein] and UDP-N-acetyl-alpha-D-glucosamine: step 6/6. Transfers the gamma-phosphate of ATP to the 4'-position of a tetraacyldisaccharide 1-phosphate intermediate (termed DS-1-P) to form tetraacyldisaccharide 1,4'-bis-phosphate (lipid IVA). This is Tetraacyldisaccharide 4'-kinase from Agrobacterium fabrum (strain C58 / ATCC 33970) (Agrobacterium tumefaciens (strain C58)).